A 438-amino-acid chain; its full sequence is Probable trafficking protein particle complex subunit 13 homolog (438 aa).

Belongs to the TRAPPC13 family.

The chain is Probable trafficking protein particle complex subunit 13 homolog from Drosophila melanogaster (Fruit fly).